The following is a 76-amino-acid chain: ATP synthase subunit c (76 aa).

The next 2 helical transmembrane spans lie at 12–32 (LGSI…GIIF) and 54–74 (ILGF…PFVY).

It belongs to the ATPase C chain family. F-type ATPases have 2 components, F(1) - the catalytic core - and F(0) - the membrane proton channel. F(1) has five subunits: alpha(3), beta(3), gamma(1), delta(1), epsilon(1). F(0) has three main subunits: a(1), b(2) and c(10-14). The alpha and beta chains form an alternating ring which encloses part of the gamma chain. F(1) is attached to F(0) by a central stalk formed by the gamma and epsilon chains, while a peripheral stalk is formed by the delta and b chains.

The protein resides in the cell membrane. F(1)F(0) ATP synthase produces ATP from ADP in the presence of a proton or sodium gradient. F-type ATPases consist of two structural domains, F(1) containing the extramembraneous catalytic core and F(0) containing the membrane proton channel, linked together by a central stalk and a peripheral stalk. During catalysis, ATP synthesis in the catalytic domain of F(1) is coupled via a rotary mechanism of the central stalk subunits to proton translocation. Functionally, key component of the F(0) channel; it plays a direct role in translocation across the membrane. A homomeric c-ring of between 10-14 subunits forms the central stalk rotor element with the F(1) delta and epsilon subunits. This Streptomyces coelicolor (strain ATCC BAA-471 / A3(2) / M145) protein is ATP synthase subunit c.